The following is a 665-amino-acid chain: MLKKHEKFYYGGDYNPEQWDESVWKEDMRLMKKAGVNYVSINIFSWARLQPDEETYDFSTLDKIMDMLAENGIGADLATATAAPPAWLSRKYPDSLPVDKDGSRFLPGSRQHYCPNSKDYARLAAKLVRKIAERYKSHPALVMWHVNNEYGCHISECYCDNCKKGFQTWLKEKYGTIENLNKSWSTDFWSQRYYEWEEICLPGKTPTFANPMQQLDYKAFMDDSLLALYKMERDILKTYTPDVPVMTNLMGLHKPVDGFHWAKEMDLVTWDAYPDPFEDIPYAQFMAHDLTRSLKKQPFLLMEQAAGAVNWRAQNAVKAPGVMRLWSYEAAAHGADGIMFFQWRASQGGAEKFHSGMVPHSGDEESRNFREVVQLGNELKNLEKVTGSAYASDVAIVFDWKNWWALELDSKPSSLVTYIKQLLPFYRVLHTQNIGVDFIHPDEAMDRYKVVFAPASYRVTKTFADKVKAYVENGGYFATNFFSGIADENERVYLGGYPGAYRDILGIYVEEFAPMKKGAVHQIRTGYGDAAIRVWEEKIHLKGAEALAWFKDGYLAGSPAVTAHHCGKGKAYYIGTQPDEQYLSSLLKEILKEADVRPALDAPRGVEVAVRKNGHEKFLFLLNHTDQVQFVDAGGTYPELIYGRTEAETVRLSPRDVKILQVIEK.

R110 provides a ligand contact to substrate. C114 contacts Zn(2+). N148 is a binding site for substrate. E149 (proton donor) is an active-site residue. Residues C157, C159, and C162 each contribute to the Zn(2+) site. Catalysis depends on E303, which acts as the Nucleophile. Substrate contacts are provided by residues W311 and 351–354 (EKFH).

The protein belongs to the glycosyl hydrolase 42 family.

The enzyme catalyses Hydrolysis of terminal non-reducing beta-D-galactose residues in beta-D-galactosides.. The chain is Beta-galactosidase LacZ from Heyndrickxia coagulans (Weizmannia coagulans).